Consider the following 538-residue polypeptide: MGVVAKNFPIPDLHRVRRVLLSVSDKTGIVAFAQALQTYNVELISTGGTAKVLMAAGLPVRDVAEVTGFPEIMDGRVKTLHPLIHGALLGVREDPSHAVAMEQYGIHGIDLLVVNLYPFEETVQSGADGQTILENIDIGGPAMIRAAAKNHVYTGVITAVSDYDAVLSELKQHDGCLSFSMRQQLAMRAYAHTAAYDTAIAAWFAKNLKIETPSWQSFSGHLKNVMRYGENPHQKAAFYRNGDKRFGVATAKLLQGKALSYNNMNDTDAAFELVAEFDPQNTAAVALIKHANPCGVAEGQTLKEAYLKALLCDNVSAFGGIIALNQPLDAECAEEVIKIFTEVIIAPDATMEAREIISGKKNLRLLLTGGVPDPRCGGFIAKTLAGGILVQSRDNVVVDDLKLQVVTKRAPSQEEMRDLQFAFRVVKHVKSNAIVYAKNSATVGIGAGQMSRVDSAKIAARKAEESAKRAGLTESLTKGSVVASDAFFPFADGLLAVAEAGATAVIQPGGSMRDEEVIAAADAQGLAMVFTGVRHFRH.

The region spanning Phe8 to Thr158 is the MGS-like domain.

Belongs to the PurH family.

It carries out the reaction (6R)-10-formyltetrahydrofolate + 5-amino-1-(5-phospho-beta-D-ribosyl)imidazole-4-carboxamide = 5-formamido-1-(5-phospho-D-ribosyl)imidazole-4-carboxamide + (6S)-5,6,7,8-tetrahydrofolate. The enzyme catalyses IMP + H2O = 5-formamido-1-(5-phospho-D-ribosyl)imidazole-4-carboxamide. Its pathway is purine metabolism; IMP biosynthesis via de novo pathway; 5-formamido-1-(5-phospho-D-ribosyl)imidazole-4-carboxamide from 5-amino-1-(5-phospho-D-ribosyl)imidazole-4-carboxamide (10-formyl THF route): step 1/1. The protein operates within purine metabolism; IMP biosynthesis via de novo pathway; IMP from 5-formamido-1-(5-phospho-D-ribosyl)imidazole-4-carboxamide: step 1/1. The sequence is that of Bifunctional purine biosynthesis protein PurH from Bartonella henselae (strain ATCC 49882 / DSM 28221 / CCUG 30454 / Houston 1) (Rochalimaea henselae).